A 374-amino-acid polypeptide reads, in one-letter code: MAVAPTSYDILMGTFRSPYLYTLTFDVLARKLQVREVNEATGGHNWLDVSPDGNTLYATVWGEPPKLTSYDIVRGGEYATTKLSRNVASQYMSGYVCSNNKAMYSACGPQVDTFLVDDNGTLLDQPAVQSFNLLQGQEKNKANGTLDFGGLRHGGHSADLSPDGTKLYVADIGRNCVWMYHVDRETGLLTEASKNIATRPHDGPRHAWPHPNGRIVYSLQEHSSYVDAFRLTDDNKLEFLEGGCIIPDEKDHDKYWADEVRLSPMADVVFGSTRGLEEGTPGFVTAWNLRPDGTFASTEATHRFQTKTSGGWANAIAVCPNLGPNGEVFMTLTDSEVGFIQILAYTSDKGFEVVDELKISTEKEHIMPATTVWL.

This sequence belongs to the cycloisomerase 2 family. Homotetramer.

It carries out the reaction (S)-muconolactone = cis,cis-muconate + H(+). It participates in aromatic compound metabolism; beta-ketoadipate pathway; 5-oxo-4,5-dihydro-2-furylacetate from catechol: step 2/3. Functionally, catalyzes a syn cycloisomerization. In Cutaneotrichosporon cutaneum (Yeast), this protein is Muconate cycloisomerase 1.